The chain runs to 293 residues: Dehydrodolichyl diphosphate synthase complex subunit NUS1 (293 aa).

The next 3 helical transmembrane spans lie at 1–23, 35–56, and 117–135; these read MTGL…RTLT, WIWR…GFTL, and IASL…ISVY. Asparagine 144 and asparagine 271 each carry an N-linked (GlcNAc...) asparagine glycan. An RXG motif; crucial for prenyltransferase activity motif is present at residues 290–292; the sequence is RLG. Residues leucine 291 and glycine 292 each contribute to the isopentenyl diphosphate site.

Belongs to the UPP synthase family. As to quaternary structure, the active dehydrodolichyl diphosphate synthase complex is a heterotetramer composed of a dimer of heterodimer of DHDDS and NUS1. Interacts with NPC2. The cofactor is Mg(2+).

The protein localises to the endoplasmic reticulum membrane. The catalysed reaction is n isopentenyl diphosphate + (2E,6E)-farnesyl diphosphate = a di-trans,poly-cis-polyprenyl diphosphate + n diphosphate. Its pathway is protein modification; protein glycosylation. It participates in lipid metabolism. With respect to regulation, activated by phospholipids including cardiolipin, phosphatidylcholine, phosphatidylethanolamine, phosphatidylinositol and phosphatidylserine. Its function is as follows. With DHDDS, forms the dehydrodolichyl diphosphate synthase (DDS) complex, an essential component of the dolichol monophosphate (Dol-P) biosynthetic machinery. Both subunits contribute to enzymatic activity, i.e. condensation of multiple copies of isopentenyl pyrophosphate (IPP) to farnesyl pyrophosphate (FPP) to produce dehydrodolichyl diphosphate (Dedol-PP), a precursor of dolichol phosphate which is utilized as a sugar carrier in protein glycosylation in the endoplasmic reticulum (ER). Synthesizes long-chain polyprenols, mostly of C95 and C100 chain length. Regulates the glycosylation and stability of nascent NPC2, thereby promoting trafficking of LDL-derived cholesterol. Acts as a specific receptor for the N-terminus of Nogo-B, a neural and cardiovascular regulator. The protein is Dehydrodolichyl diphosphate synthase complex subunit NUS1 of Homo sapiens (Human).